The sequence spans 288 residues: Diaminopimelate epimerase (288 aa).

Residues asparagine 13, glutamine 46, and asparagine 66 each contribute to the substrate site. The Proton donor role is filled by cysteine 75. Substrate-binding positions include 76–77, asparagine 166, asparagine 199, and 217–218; these read GN and ER. Residue cysteine 226 is the Proton acceptor of the active site. A substrate-binding site is contributed by 227–228; it reads GT.

It belongs to the diaminopimelate epimerase family. In terms of assembly, homodimer.

It is found in the cytoplasm. The catalysed reaction is (2S,6S)-2,6-diaminopimelate = meso-2,6-diaminopimelate. The protein operates within amino-acid biosynthesis; L-lysine biosynthesis via DAP pathway; DL-2,6-diaminopimelate from LL-2,6-diaminopimelate: step 1/1. Catalyzes the stereoinversion of LL-2,6-diaminopimelate (L,L-DAP) to meso-diaminopimelate (meso-DAP), a precursor of L-lysine and an essential component of the bacterial peptidoglycan. In Cupriavidus necator (strain ATCC 17699 / DSM 428 / KCTC 22496 / NCIMB 10442 / H16 / Stanier 337) (Ralstonia eutropha), this protein is Diaminopimelate epimerase.